Reading from the N-terminus, the 212-residue chain is Stem bromelain (212 aa).

2 disulfide bridges follow: Cys-23–Cys-63 and Cys-57–Cys-96. Cys-26 is an active-site residue. A glycan (N-linked (GlcNAc...) asparagine) is linked at Asn-117. The cysteines at positions 152 and 199 are disulfide-linked. His-158 is a catalytic residue.

It belongs to the peptidase C1 family.

It catalyses the reaction Broad specificity for cleavage of proteins, but strong preference for Z-Arg-Arg-|-NHMec among small molecule substrates.. In terms of biological role, cysteine proteinase with a high level of diversity in substrate specificity. This chain is Stem bromelain, found in Ananas comosus (Pineapple).